The sequence spans 442 residues: Serine hydroxymethyltransferase (442 aa).

Pyridoxal 5'-phosphate contacts are provided by residues Tyr54, 100–102 (SGS), and His236. A disulfide bridge links Cys125 with Cys364. An N6-(pyridoxal phosphate)lysine modification is found at Lys237. Gly272 contributes to the pyridoxal 5'-phosphate binding site.

This sequence belongs to the SHMT family. In terms of assembly, homodimer. It depends on pyridoxal 5'-phosphate as a cofactor.

The protein localises to the cytoplasm. It is found in the mitochondrion matrix. The protein resides in the plastid. Its subcellular location is the apicoplast. It localises to the nucleus. The enzyme catalyses (6R)-5,10-methylene-5,6,7,8-tetrahydrofolate + glycine + H2O = (6S)-5,6,7,8-tetrahydrofolate + L-serine. It participates in one-carbon metabolism; tetrahydrofolate interconversion. With respect to regulation, redox regulation; active in reducing conditions, inactive in oxidizing conditions. The reduction of the cysteine pairs allows the access binding of the tetrahydrofolate substrate to its binding site. This mechanism appears to be unique to Plasmodium species. In terms of biological role, catalyzes the interconversion of serine to glycine accompanied with the production of 5,10-methylenetetrahydrofolate, a source of one-carbon units used by thymidylate synthase to convert dUMP to dTMP for DNA synthesis. Binds to its own mRNA and to the mRNA of bifunctional dihydrofolate reductase-thymidylate synthase (DHFR-TS) in vitro; the physiological relevance of this interaction is not clear. This Plasmodium falciparum (isolate 3D7) protein is Serine hydroxymethyltransferase.